The following is a 426-amino-acid chain: D-tagatose-1,6-bisphosphate aldolase subunit KbaZ (426 aa).

The protein belongs to the GatZ/KbaZ family. KbaZ subfamily. In terms of assembly, forms a complex with KbaY.

It participates in carbohydrate metabolism; D-tagatose 6-phosphate degradation; D-glyceraldehyde 3-phosphate and glycerone phosphate from D-tagatose 6-phosphate: step 2/2. Functionally, component of the tagatose-1,6-bisphosphate aldolase KbaYZ that is required for full activity and stability of the Y subunit. Could have a chaperone-like function for the proper and stable folding of KbaY. When expressed alone, KbaZ does not show any aldolase activity. In Escherichia coli O17:K52:H18 (strain UMN026 / ExPEC), this protein is D-tagatose-1,6-bisphosphate aldolase subunit KbaZ.